We begin with the raw amino-acid sequence, 324 residues long: Methionyl-tRNA formyltransferase (324 aa).

113-116 contacts (6S)-5,6,7,8-tetrahydrofolate; it reads SLLP.

It belongs to the Fmt family.

It catalyses the reaction L-methionyl-tRNA(fMet) + (6R)-10-formyltetrahydrofolate = N-formyl-L-methionyl-tRNA(fMet) + (6S)-5,6,7,8-tetrahydrofolate + H(+). Attaches a formyl group to the free amino group of methionyl-tRNA(fMet). The formyl group appears to play a dual role in the initiator identity of N-formylmethionyl-tRNA by promoting its recognition by IF2 and preventing the misappropriation of this tRNA by the elongation apparatus. This chain is Methionyl-tRNA formyltransferase, found in Bacteroides fragilis (strain ATCC 25285 / DSM 2151 / CCUG 4856 / JCM 11019 / LMG 10263 / NCTC 9343 / Onslow / VPI 2553 / EN-2).